The chain runs to 146 residues: MLDQQTINIIKATVPVLKEHGVTITTTFYKNLFAKHPEVRPLFDMGRQESLEQPKALAMTVLAAAQNIENLPAILPAVKKIAVKHCQAGVAAAHYPIVGQELLGAIKEVLGDAATDDILDAWGKAYGVIADVFIQVEADLYAQAVE.

The region spanning 1–138 (MLDQQTINII…IADVFIQVEA (138 aa)) is the Globin domain. 2 residues coordinate heme b: Gln-53 and His-85.

It belongs to the globin family. As to quaternary structure, homodimer.

This protein functions as a terminal oxidase. The polypeptide is Bacterial hemoglobin (vhb) (Vitreoscilla stercoraria).